The primary structure comprises 424 residues: Galacturonokinase (424 aa).

At Ser-2 the chain carries N-acetylserine. 146 to 155 (DSSGLSSSAA) lines the ATP pocket. The active-site Proton acceptor is the Asp-197.

This sequence belongs to the GHMP kinase family. The cofactor is Mg(2+). It depends on Mn(2+) as a cofactor. Ca(2+) serves as cofactor. As to expression, expressed in roots, stems, leaves, flowers and young siliques. Higher expression in the elongating middle stem region than in the lower or upper stem region.

The enzyme catalyses D-galacturonate + ATP = 1-phospho-alpha-D-galacturonate + ADP + H(+). With respect to regulation, inhibited by EDTA and ADP. Sugar-1-kinase with a strict substrate specificity for the alpha-anomeric configuration of D-galacturonic acid (D-GalA) and ATP. Involved in the biosynthesis of UDP-galacturonic acid (UDP-GalA) from the salvaged GalA that is released during growth-dependent cell wall restructuring. This is Galacturonokinase (GALAK) from Arabidopsis thaliana (Mouse-ear cress).